A 180-amino-acid chain; its full sequence is ADP ribosylation factor 4 (180 aa).

Gly-2 is lipidated: N-myristoyl glycine. GTP-binding positions include 24–31, 67–71, and 126–129; these read GLDAAGKT, DVGGQ, and NKQD.

It belongs to the small GTPase superfamily. Arf family. As to expression, uniformly distributed throughout adults.

The protein localises to the golgi apparatus. Functionally, GTP-binding protein involved in protein trafficking; may modulate vesicle budding and uncoating within the Golgi apparatus. In Drosophila melanogaster (Fruit fly), this protein is ADP ribosylation factor 4.